The primary structure comprises 375 residues: ATP-sensitive inward rectifier potassium channel 15 (375 aa).

Residues 1–60 lie on the Cytoplasmic side of the membrane; it reads MDAIHLGMSSAPLVKHTNGVGLKAHRPRVMSKSGHSNVRIDKVDGIYLLYLQDLWTTVID. A helical transmembrane segment spans residues 61-87; that stretch reads MKWRYKLTLFAATFVMTWFLFGVVYYA. Over 88-113 the chain is Extracellular; it reads IAFIHGDLQLGESNSNHTPCIMKVDS. An intramembrane region (helical; Pore-forming) is located at residues 114 to 130; sequence LTGAFLFSLESQTTIGY. Positions 127–132 match the Selectivity filter motif; it reads TIGYGV. Residues 131–139 are Extracellular-facing; it reads GVRSITEEC. Residues 140-165 traverse the membrane as a helical segment; it reads PHAIFLLVAQLVITTLIEIFITGTFL. Residues 166–375 are Cytoplasmic-facing; the sequence is AKIARPKKRA…RSLLLQQSNV (210 aa).

It belongs to the inward rectifier-type potassium channel (TC 1.A.2.1) family. KCNJ15 subfamily. In terms of assembly, can form heteromultimeric channels with Kir5.1/KCNJ16. Interacts with PATJ. Expressed in the proximal segment of the nephron.

The protein localises to the membrane. The protein resides in the cell membrane. The enzyme catalyses K(+)(in) = K(+)(out). Its activity is regulated as follows. Channel activity is regulated by variations of cytosolic pH; reversibly inhibited by acidic pH values. Inhibited by Ba(2+) and Cs(+) in a voltage-dependent manner. In terms of biological role, inward rectifier potassium channels are characterized by a greater tendency to allow potassium to flow into the cell rather than out of it. Their voltage dependence is regulated by the concentration of extracellular potassium; as external potassium is raised, the voltage range of the channel opening shifts to more positive voltages. The inward rectification is mainly due to the blockage of outward current by internal magnesium. This chain is ATP-sensitive inward rectifier potassium channel 15 (Kcnj15), found in Mus musculus (Mouse).